We begin with the raw amino-acid sequence, 1854 residues long: PKS-NRPS hybrid synthetase ATPKS (1854 aa).

The adenylation (A) domain stretch occupies residues 24–423 (FDQTQTRYSP…GRADTQIKIR (400 aa)). Residues 523 to 598 (IPASTLTQQL…NLAAYLSDQT (76 aa)) form the Carrier 1 domain. Position 558 is an O-(pantetheine 4'-phosphoryl)serine (serine 558). The Ketosynthase family 3 (KS3) domain occupies 617–1049 (GEDIAVISMA…GTNAHAIIEE (433 aa)). Catalysis depends on for beta-ketoacyl synthase activity residues cysteine 791, histidine 926, and histidine 967. A malonyl-CoA:ACP transacylase (MAT) domain region spans residues 1162-1496 (LFSGQGTERA…SLSDLHIRKV (335 aa)). Residues 1536 to 1556 (KSSGQPSGQSPSGCPQPTGQI) form a disordered region. Residues 1537 to 1555 (SSGQPSGQSPSGCPQPTGQ) are compositionally biased toward low complexity. The 76-residue stretch at 1776–1851 (MMLQGLVRGI…SLSDALQKQV (76 aa)) folds into the Carrier 2 domain. Serine 1811 carries the O-(pantetheine 4'-phosphoryl)serine modification.

It in the C-terminal section; belongs to the NRP synthetase family.

The protein operates within secondary metabolite biosynthesis. PKS-NRPS hybrid synthetase; part of the gene cluster that mediates the biosynthesis of pyrophen and campyrone B, which represent a class of fungal amino acid-derived alpha-pyrone natural products. The first step of pyrophen biosynthesis is catalyzed by the PKS-NRPS hybrid synthetase ATPKS that uptakes and condensates L-phenylalanine and malonyl-CoA in order to produce desmethyldesacetylpyrophen. Although the A domain does not discriminate between 2 enantiomeric phenylalanines, the downstream KS domain must play a gate keeping role to stereoselectively accept the L-phenylalanyl-S-phosphopantetheine (Ppant)-T domain intermediate for chain elongation. The resulting amino acid derived diketide is off-loaded through lactonization to yield the alpha-pyrone intermediate desmethyldesacetylpyrophen. The cluster-specific O-methyltransferase (OMT) then methylates desmethyldesacetylpyrophen to desacetylpyrophen, which is further acetylated to pyrophen by an endogenous yet unidentified N-acetyltransferase. ATPKS has relaxed substrate specificity to activate and extend branched-chain amino acid L-leucine to produce small amounts of campyrone B. The chain is PKS-NRPS hybrid synthetase ATPKS from Aspergillus niger (strain ATCC 1015 / CBS 113.46 / FGSC A1144 / LSHB Ac4 / NCTC 3858a / NRRL 328 / USDA 3528.7).